Here is a 135-residue protein sequence, read N- to C-terminus: ATP synthase epsilon chain (135 aa).

This sequence belongs to the ATPase epsilon chain family. As to quaternary structure, F-type ATPases have 2 components, CF(1) - the catalytic core - and CF(0) - the membrane proton channel. CF(1) has five subunits: alpha(3), beta(3), gamma(1), delta(1), epsilon(1). CF(0) has three main subunits: a, b and c.

The protein resides in the cell inner membrane. In terms of biological role, produces ATP from ADP in the presence of a proton gradient across the membrane. The chain is ATP synthase epsilon chain from Desulforapulum autotrophicum (strain ATCC 43914 / DSM 3382 / VKM B-1955 / HRM2) (Desulfobacterium autotrophicum).